The primary structure comprises 186 residues: uncharacterized protein (186 aa).

In terms of domain architecture, N-acetyltransferase spans 12 to 184; that stretch reads LLKSPVEEDD…HIYKLSKQIR (173 aa).

It belongs to the acetyltransferase family.

The protein resides in the cytoplasm. The protein localises to the nucleus. This is an uncharacterized protein from Schizosaccharomyces pombe (strain 972 / ATCC 24843) (Fission yeast).